Consider the following 715-residue polypeptide: ABC transporter F family member 3 (715 aa).

The residue at position 2 (T2) is an N-acetylthreonine. Residues 96 to 118 (VRMNDGMDDGPVKKKKPEPVDGP) are disordered. ABC transporter domains are found at residues 175 to 436 (IHMD…KNQQ) and 504 to 713 (ISFS…LLQS). Residues 207 to 214 (GRNGTGKT) and 537 to 544 (GPNGIGKS) each bind ATP.

This sequence belongs to the ABC transporter superfamily. ABCF family. EF3 (TC 3.A.1.121) subfamily.

The chain is ABC transporter F family member 3 (ABCF3) from Arabidopsis thaliana (Mouse-ear cress).